The following is a 171-amino-acid chain: Phosphopantetheine adenylyltransferase (171 aa).

Thr-9 contacts substrate. ATP contacts are provided by residues 9–10 (TF) and His-17. Residues Lys-41, Leu-73, and Arg-87 each contribute to the substrate site. Residues 88–90 (GLR), Glu-98, and 123–129 (YQFISGT) each bind ATP.

Belongs to the bacterial CoaD family. In terms of assembly, homohexamer. Mg(2+) is required as a cofactor.

The protein resides in the cytoplasm. It catalyses the reaction (R)-4'-phosphopantetheine + ATP + H(+) = 3'-dephospho-CoA + diphosphate. Its pathway is cofactor biosynthesis; coenzyme A biosynthesis; CoA from (R)-pantothenate: step 4/5. Functionally, reversibly transfers an adenylyl group from ATP to 4'-phosphopantetheine, yielding dephospho-CoA (dPCoA) and pyrophosphate. The protein is Phosphopantetheine adenylyltransferase of Paraburkholderia xenovorans (strain LB400).